Consider the following 477-residue polypeptide: Ubiquitin carboxyl-terminal hydrolase 7 (477 aa).

The region spanning L2 to I77 is the Ubiquitin-like domain. The USP domain occupies A104–R473. Residue C113 is the Nucleophile of the active site. The segment at M171–G190 is calmodulin-binding. Residues Q364 to S401 are disordered. A compositionally biased stretch (basic and acidic residues) spans S371–D380. Residues E382 to G399 show a composition bias toward polar residues. The active-site Proton acceptor is H425.

This sequence belongs to the peptidase C19 family. In terms of assembly, interacts with calmodulin (CaM).

It carries out the reaction Thiol-dependent hydrolysis of ester, thioester, amide, peptide and isopeptide bonds formed by the C-terminal Gly of ubiquitin (a 76-residue protein attached to proteins as an intracellular targeting signal).. Its function is as follows. Recognizes and hydrolyzes the peptide bond at the C-terminal Gly of ubiquitin. Involved in the processing of poly-ubiquitin precursors as well as that of ubiquitinated proteins. This chain is Ubiquitin carboxyl-terminal hydrolase 7 (UBP7), found in Arabidopsis thaliana (Mouse-ear cress).